The primary structure comprises 180 residues: Cytidylate kinase (180 aa).

7–15 (GLPGSGTTT) lines the ATP pocket.

The protein belongs to the cytidylate kinase family. Type 2 subfamily.

The protein resides in the cytoplasm. It carries out the reaction CMP + ATP = CDP + ADP. The catalysed reaction is dCMP + ATP = dCDP + ADP. This chain is Cytidylate kinase, found in Methanosarcina acetivorans (strain ATCC 35395 / DSM 2834 / JCM 12185 / C2A).